Consider the following 167-residue polypeptide: NADH-quinone oxidoreductase subunit B (167 aa).

The [4Fe-4S] cluster site is built by Cys-40, Cys-41, Cys-105, and Cys-135.

This sequence belongs to the complex I 20 kDa subunit family. As to quaternary structure, NDH-1 is composed of 14 different subunits. Subunits NuoB, C, D, E, F, and G constitute the peripheral sector of the complex. The cofactor is [4Fe-4S] cluster.

The protein localises to the cell inner membrane. The catalysed reaction is a quinone + NADH + 5 H(+)(in) = a quinol + NAD(+) + 4 H(+)(out). In terms of biological role, NDH-1 shuttles electrons from NADH, via FMN and iron-sulfur (Fe-S) centers, to quinones in the respiratory chain. The immediate electron acceptor for the enzyme in this species is believed to be ubiquinone. Couples the redox reaction to proton translocation (for every two electrons transferred, four hydrogen ions are translocated across the cytoplasmic membrane), and thus conserves the redox energy in a proton gradient. This chain is NADH-quinone oxidoreductase subunit B, found in Magnetococcus marinus (strain ATCC BAA-1437 / JCM 17883 / MC-1).